We begin with the raw amino-acid sequence, 85 residues long: Depressant scorpion toxin BmKIM (85 aa).

An N-terminal signal peptide occupies residues methionine 1–alanine 21. Positions aspartate 22–glycine 82 constitute an LCN-type CS-alpha/beta domain. 4 disulfides stabilise this stretch: cysteine 31–cysteine 81, cysteine 35–cysteine 56, cysteine 42–cysteine 63, and cysteine 46–cysteine 65. Glycine amide is present on glycine 82.

This sequence belongs to the long (4 C-C) scorpion toxin superfamily. Sodium channel inhibitor family. In terms of tissue distribution, expressed by the venom gland.

It is found in the secreted. Its function is as follows. Causes a slow progressive depressant flaccid paralysis, when injected into S.falculata blowfly larvae. Inhibits dose-dependently the total sodium (Nav) currents both in dorsal root ganglia neurons and in ventricular myocytes. Is toxic to mice by intravenous injection, but not by subcutaneous or intracerebroventricular injection. Produces antiarrhythmia in rat. Is then active on both mammals and insects. The chain is Depressant scorpion toxin BmKIM (KIM2) from Olivierus martensii (Manchurian scorpion).